The following is a 164-amino-acid chain: uncharacterized protein (164 aa).

This is an uncharacterized protein from Saccharomyces cerevisiae (strain ATCC 204508 / S288c) (Baker's yeast).